Here is a 544-residue protein sequence, read N- to C-terminus: Putative ligase Rv1013 (544 aa).

K528 participates in a covalent cross-link: Isoglutamyl lysine isopeptide (Lys-Gln) (interchain with Q-Cter in protein Pup).

This sequence belongs to the ATP-dependent AMP-binding enzyme family. Post-translationally, pupylated at Lys-528 by the prokaryotic ubiquitin-like protein Pup, which probably leads to its degradation by the proteasome.

The protein is Putative ligase Rv1013 (pks16) of Mycobacterium tuberculosis (strain ATCC 25618 / H37Rv).